A 412-amino-acid chain; its full sequence is Propionate kinase (412 aa).

Belongs to the acetokinase family. PduW subfamily.

The protein resides in the cytoplasm. It carries out the reaction propanoate + ATP = propanoyl phosphate + ADP. The protein operates within polyol metabolism; 1,2-propanediol degradation. In terms of biological role, works with phosphate acetyltransferase (pta) to capture exogenous propionate and regenerate propionyl-CoA during degradation of 1,2-propanediol (1,2-PD). This chain is Propionate kinase, found in Yersinia enterocolitica serotype O:8 / biotype 1B (strain NCTC 13174 / 8081).